The following is a 257-amino-acid chain: NAD kinase (257 aa).

Catalysis depends on Asp46, which acts as the Proton acceptor. Residues 46 to 47, 116 to 117, Asp146, Ala154, 157 to 162, and Asn218 contribute to the NAD(+) site; these read DG, NE, and TAYNLS.

It belongs to the NAD kinase family. The cofactor is a divalent metal cation.

Its subcellular location is the cytoplasm. The catalysed reaction is NAD(+) + ATP = ADP + NADP(+) + H(+). In terms of biological role, involved in the regulation of the intracellular balance of NAD and NADP, and is a key enzyme in the biosynthesis of NADP. Catalyzes specifically the phosphorylation on 2'-hydroxyl of the adenosine moiety of NAD to yield NADP. This chain is NAD kinase, found in Brucella melitensis biotype 1 (strain ATCC 23456 / CCUG 17765 / NCTC 10094 / 16M).